Reading from the N-terminus, the 205-residue chain is Small ribosomal subunit protein uS4 (205 aa).

Positions 1–16 are enriched in basic and acidic residues; the sequence is MSKRETTKYKIDRRMG. The segment at 1–46 is disordered; sequence MSKRETTKYKIDRRMGENIWGRPKSPVNRRDYGPGQHGQRRKGKLS. The region spanning 94 to 157 is the S4 RNA-binding domain; that stretch reads SRLDAVVYRA…KQLVLVLESV (64 aa).

This sequence belongs to the universal ribosomal protein uS4 family. As to quaternary structure, part of the 30S ribosomal subunit. Contacts protein S5. The interaction surface between S4 and S5 is involved in control of translational fidelity.

In terms of biological role, one of the primary rRNA binding proteins, it binds directly to 16S rRNA where it nucleates assembly of the body of the 30S subunit. Its function is as follows. With S5 and S12 plays an important role in translational accuracy. This chain is Small ribosomal subunit protein uS4, found in Bartonella tribocorum (strain CIP 105476 / IBS 506).